Here is a 237-residue protein sequence, read N- to C-terminus: Ribosomal RNA small subunit methyltransferase G (237 aa).

S-adenosyl-L-methionine contacts are provided by residues Gly-76, Phe-81, 128 to 129 (IE), and Arg-147.

Belongs to the methyltransferase superfamily. RNA methyltransferase RsmG family.

The protein resides in the cytoplasm. Functionally, specifically methylates the N7 position of a guanine in 16S rRNA. The protein is Ribosomal RNA small subunit methyltransferase G of Prochlorococcus marinus (strain MIT 9301).